We begin with the raw amino-acid sequence, 353 residues long: Aromatic amino acid aminotransferase (353 aa).

Residue K217 is modified to N6-(pyridoxal phosphate)lysine.

Belongs to the class-II pyridoxal-phosphate-dependent aminotransferase family. As to quaternary structure, homodimer. Requires pyridoxal 5'-phosphate as cofactor.

The catalysed reaction is an aromatic L-alpha-amino acid + 2-oxoglutarate = an aromatic oxo-acid + L-glutamate. Its function is as follows. Aminotransferase that catalyzes the conversion of aromatic amino acids and 2-oxoglutarate into corresponding aromatic oxo acids and L-glutamate. The chain is Aromatic amino acid aminotransferase from Mycobacterium tuberculosis (strain ATCC 25177 / H37Ra).